A 350-amino-acid chain; its full sequence is tRNA dimethylallyltransferase (350 aa).

Residues M1–P20 form a disordered region. Over residues P10–P20 the composition is skewed to pro residues. G27–T34 is an ATP binding site. T29–T34 is a binding site for substrate. 3 interaction with substrate tRNA regions span residues D52–L55, Q176–R180, and R273–R278.

It belongs to the IPP transferase family. As to quaternary structure, monomer. Mg(2+) serves as cofactor.

The enzyme catalyses adenosine(37) in tRNA + dimethylallyl diphosphate = N(6)-dimethylallyladenosine(37) in tRNA + diphosphate. Functionally, catalyzes the transfer of a dimethylallyl group onto the adenine at position 37 in tRNAs that read codons beginning with uridine, leading to the formation of N6-(dimethylallyl)adenosine (i(6)A). This Albidiferax ferrireducens (strain ATCC BAA-621 / DSM 15236 / T118) (Rhodoferax ferrireducens) protein is tRNA dimethylallyltransferase.